We begin with the raw amino-acid sequence, 183 residues long: Inner membrane protein p54 (183 aa).

The helical transmembrane segment at 32–52 (YTILIAIVVLVIIIIVLIYLF) threads the bilayer. Positions 81 to 157 (EVTPQPGTSK…PYTTVTTQNT (77 aa)) are disordered. Residues 111-122 (RPATNKPVTDNP) show a composition bias toward polar residues. The span at 130–143 (ATGGPAAAPAAASA) shows a compositional bias: low complexity. The interaction with host DYNLL1 stretch occupies residues 149-161 (YTTVTTQNTASQT).

Belongs to the asfivirus envelope protein p54 family. As to quaternary structure, interacts with the host light chain cytoplasmic dynein DYNLL1; this interaction is critical for intracellular microtubule-dependent virus transport toward viral factories.

The protein resides in the virion membrane. It is found in the host cytoplasm. The protein localises to the host cytoskeleton. It localises to the host endoplasmic reticulum membrane. Functionally, inner envelope protein involved, through its interaction with host dynein, in the intracellular microtubule-dependent transport of viral capsid toward viral factories. Seems to induce caspase-3 activation and apoptosis. Plays a role in virion morphogenesis by recruiting and transforming the host ER membranes into the precursors of the viral envelope. Involved in virus attachment to the host cell. This Ornithodoros (relapsing fever ticks) protein is Inner membrane protein p54.